The chain runs to 326 residues: MEGVELKEEWQDEDFPIPLPEDDSIEADTLDGTDPDRQPGSLEVNGNKVRKKLMAPDISLTLDPGEDSLWSDDLDEAGEVDLEGLDTPSENSDEFEWEDDLPKPKTTEVIRKGSITEYTATEEKGDGRRWRMFRIGEQDHRVDMKAIEPYKKVISHGGYYGDGLNAIVVFAVCFMPESGQPNYRYLMDNLFKYVIGTLELLVAENYMIIYLNGATTRRKMPSLGWLRRCYQQIDRRLRKNLKSLIIVHPSWFIRTLLAVTRPFISSKFSQKIRYVFNLAELAELVPMEYVGIPECIKQYEEEKFKKRQKRVDQELNGKQEPPKSEQ.

The disordered stretch occupies residues 1–47; sequence MEGVELKEEWQDEDFPIPLPEDDSIEADTLDGTDPDRQPGSLEVNGN. Positions 10–33 are enriched in acidic residues; sequence WQDEDFPIPLPEDDSIEADTLDGT. Residue Ser-41 is modified to Phosphoserine. At Thr-87 the chain carries Phosphothreonine. Phosphoserine occurs at positions 89, 92, and 114. The region spanning 147-304 is the CRAL-TRIO domain; the sequence is IEPYKKVISH…CIKQYEEEKF (158 aa).

It localises to the cytoplasm. The protein resides in the perinuclear region. Implicated in the suppression of cell death. Interacts with the BCL-2 and adenovirus E1B 19 kDa proteins. In Mus musculus (Mouse), this protein is BCL2/adenovirus E1B 19 kDa protein-interacting protein 2 (Bnip2).